A 548-amino-acid chain; its full sequence is Chaperonin GroEL (548 aa).

Residues 30–33 (TLGP), lysine 51, 87–91 (DGTTT), glycine 415, 479–481 (NAA), and aspartate 495 contribute to the ATP site.

The protein belongs to the chaperonin (HSP60) family. As to quaternary structure, forms a cylinder of 14 subunits composed of two heptameric rings stacked back-to-back. Interacts with the co-chaperonin GroES.

The protein localises to the cytoplasm. The enzyme catalyses ATP + H2O + a folded polypeptide = ADP + phosphate + an unfolded polypeptide.. Functionally, together with its co-chaperonin GroES, plays an essential role in assisting protein folding. The GroEL-GroES system forms a nano-cage that allows encapsulation of the non-native substrate proteins and provides a physical environment optimized to promote and accelerate protein folding. In Proteus mirabilis (strain HI4320), this protein is Chaperonin GroEL.